Reading from the N-terminus, the 1060-residue chain is DNA-directed RNA polymerase subunit beta (1060 aa).

This sequence belongs to the RNA polymerase beta chain family. As to quaternary structure, in plastids the minimal PEP RNA polymerase catalytic core is composed of four subunits: alpha, beta, beta', and beta''. When a (nuclear-encoded) sigma factor is associated with the core the holoenzyme is formed, which can initiate transcription.

It is found in the plastid. It localises to the chloroplast. It catalyses the reaction RNA(n) + a ribonucleoside 5'-triphosphate = RNA(n+1) + diphosphate. In terms of biological role, DNA-dependent RNA polymerase catalyzes the transcription of DNA into RNA using the four ribonucleoside triphosphates as substrates. The chain is DNA-directed RNA polymerase subunit beta from Helianthus annuus (Common sunflower).